The chain runs to 200 residues: Small ribosomal subunit protein uS4 (200 aa).

Positions 22–42 are disordered; that stretch reads TGKELEKRPYAPGPHGPNQRK. An S4 RNA-binding domain is found at 92-152; the sequence is ARLDNLVYRM…EKSNSLVVVK (61 aa).

This sequence belongs to the universal ribosomal protein uS4 family. Part of the 30S ribosomal subunit. Contacts protein S5. The interaction surface between S4 and S5 is involved in control of translational fidelity.

In terms of biological role, one of the primary rRNA binding proteins, it binds directly to 16S rRNA where it nucleates assembly of the body of the 30S subunit. Its function is as follows. With S5 and S12 plays an important role in translational accuracy. This is Small ribosomal subunit protein uS4 from Bacillus cereus (strain B4264).